Here is a 288-residue protein sequence, read N- to C-terminus: 4-diphosphocytidyl-2-C-methyl-D-erythritol kinase (288 aa).

Lys11 is a catalytic residue. 100 to 110 (PTSAGLGSGSS) provides a ligand contact to ATP. The active site involves Asp140.

This sequence belongs to the GHMP kinase family. IspE subfamily.

It catalyses the reaction 4-CDP-2-C-methyl-D-erythritol + ATP = 4-CDP-2-C-methyl-D-erythritol 2-phosphate + ADP + H(+). Its pathway is isoprenoid biosynthesis; isopentenyl diphosphate biosynthesis via DXP pathway; isopentenyl diphosphate from 1-deoxy-D-xylulose 5-phosphate: step 3/6. Functionally, catalyzes the phosphorylation of the position 2 hydroxy group of 4-diphosphocytidyl-2C-methyl-D-erythritol. The polypeptide is 4-diphosphocytidyl-2-C-methyl-D-erythritol kinase (Wolbachia sp. subsp. Brugia malayi (strain TRS)).